A 141-amino-acid chain; its full sequence is Putative pre-16S rRNA nuclease (141 aa).

Belongs to the YqgF nuclease family.

The protein localises to the cytoplasm. Functionally, could be a nuclease involved in processing of the 5'-end of pre-16S rRNA. The protein is Putative pre-16S rRNA nuclease of Pseudomonas putida (strain ATCC 47054 / DSM 6125 / CFBP 8728 / NCIMB 11950 / KT2440).